The chain runs to 419 residues: MSRYVFTSESVTEGHPDKICDQVSDAVLDALLAQDPSSRVACETVVNTGLCLITGEVTSNAQVDFIHLVRNVIREIGYSGARAGGFDATSCAVLVALDQQSPDIAQGVNEADDHSGDPLDKVGAGDQGIMFGYACDETPELMPLPISLAHRLARQLAAVRHDGSLSYLLPDGKTQVSVVYENDRPVAIDTILISTQHTSEVEGISDENGIRERITQDLWTHVVEPATADLPLKPNREATRFLVNPTGKFVVGGPQGDAGLTGRKIIVDTYGGYARHGGGAFSGKDPTKVDRSAAYAARFVAKCLVAAGLAQRAEVQLSYAIGVAKPVSILVESFGTGKVTNDELTALVQDHFDLRPGAIIEQFKLRQLPQQRGGRFYQDTAAYGHFGRPDLKLPWEDVTDKASTLLQAEAQQQKQGSSL.

His-15 provides a ligand contact to ATP. Residue Asp-17 coordinates Mg(2+). K(+) is bound at residue Glu-43. Glu-56 and Gln-100 together coordinate L-methionine. The tract at residues 100–110 (QSPDIAQGVNE) is flexible loop. ATP is bound by residues 171-173 (DGK), 248-249 (KF), Asp-257, 263-264 (RK), Ala-280, and Lys-284. Asp-257 lines the L-methionine pocket. Lys-288 contributes to the L-methionine binding site.

Belongs to the AdoMet synthase family. In terms of assembly, homotetramer; dimer of dimers. The cofactor is Mg(2+). K(+) is required as a cofactor.

The protein localises to the cytoplasm. The enzyme catalyses L-methionine + ATP + H2O = S-adenosyl-L-methionine + phosphate + diphosphate. The protein operates within amino-acid biosynthesis; S-adenosyl-L-methionine biosynthesis; S-adenosyl-L-methionine from L-methionine: step 1/1. In terms of biological role, catalyzes the formation of S-adenosylmethionine (AdoMet) from methionine and ATP. The overall synthetic reaction is composed of two sequential steps, AdoMet formation and the subsequent tripolyphosphate hydrolysis which occurs prior to release of AdoMet from the enzyme. In Prochlorococcus marinus (strain MIT 9313), this protein is S-adenosylmethionine synthase.